Here is a 158-residue protein sequence, read N- to C-terminus: C-type lectin lectoxin-Enh5 (158 aa).

An N-terminal signal peptide occupies residues 1 to 23 (MGQFTVVSLGLLAVFLSLSGAKG). Disulfide bonds link Cys26/Cys37, Cys54/Cys154, and Cys129/Cys146. The 123-residue stretch at 33-155 (RNGVCNKLFP…CASLHPFICQ (123 aa)) folds into the C-type lectin domain. The Mannose-binding motif lies at 119–121 (EPN). Residues Glu127, Asn142, and Asp143 each contribute to the Ca(2+) site.

The protein belongs to the true venom lectin family. In terms of tissue distribution, expressed by the venom gland.

The protein resides in the secreted. Its function is as follows. Mannose-binding lectin which recognizes specific carbohydrate structures and agglutinates a variety of animal cells by binding to cell-surface glycoproteins and glycolipids. May be a calcium-dependent lectin. The polypeptide is C-type lectin lectoxin-Enh5 (Pseudoferania polylepis (Macleay's water snake)).